The chain runs to 395 residues: 8-amino-7-oxononanoate synthase (395 aa).

Residue arginine 24 coordinates substrate. Residue 111–112 (GF) coordinates pyridoxal 5'-phosphate. Residue histidine 136 coordinates substrate. Residues serine 184, 209–212 (DDAH), and 240–243 (TLSK) each bind pyridoxal 5'-phosphate. Lysine 243 carries the post-translational modification N6-(pyridoxal phosphate)lysine. Threonine 357 serves as a coordination point for substrate.

This sequence belongs to the class-II pyridoxal-phosphate-dependent aminotransferase family. BioF subfamily. In terms of assembly, homodimer. The cofactor is pyridoxal 5'-phosphate.

The enzyme catalyses 6-carboxyhexanoyl-[ACP] + L-alanine + H(+) = (8S)-8-amino-7-oxononanoate + holo-[ACP] + CO2. The protein operates within cofactor biosynthesis; biotin biosynthesis. Its function is as follows. Catalyzes the decarboxylative condensation of pimeloyl-[acyl-carrier protein] and L-alanine to produce 8-amino-7-oxononanoate (AON), [acyl-carrier protein], and carbon dioxide. The polypeptide is 8-amino-7-oxononanoate synthase (Alkaliphilus metalliredigens (strain QYMF)).